Consider the following 444-residue polypeptide: Chromosomal replication initiator protein DnaA (444 aa).

The interval 1–66 (MKSEIIESLK…SKTLRELFGK (66 aa)) is domain I, interacts with DnaA modulators. Residues 66–100 (KPMDFRIEHASAKTEEKLDSNEDEPLVKKRPLILT) form a domain II region. The tract at residues 101-317 (PLNPILTFEN…GALVKLIMYQ (217 aa)) is domain III, AAA+ region. Residues glycine 144, glycine 146, lysine 147, and threonine 148 each coordinate ATP. Residues 318–444 (QISGEKVDLQ…VTGQILDQSV (127 aa)) are domain IV, binds dsDNA.

This sequence belongs to the DnaA family. In terms of assembly, oligomerizes as a right-handed, spiral filament on DNA at oriC.

It localises to the cytoplasm. In terms of biological role, plays an essential role in the initiation and regulation of chromosomal replication. ATP-DnaA binds to the origin of replication (oriC) to initiate formation of the DNA replication initiation complex once per cell cycle. Binds the DnaA box (a 9 base pair repeat at the origin) and separates the double-stranded (ds)DNA. Forms a right-handed helical filament on oriC DNA; dsDNA binds to the exterior of the filament while single-stranded (ss)DNA is stabiized in the filament's interior. The ATP-DnaA-oriC complex binds and stabilizes one strand of the AT-rich DNA unwinding element (DUE), permitting loading of DNA polymerase. After initiation quickly degrades to an ADP-DnaA complex that is not apt for DNA replication. Binds acidic phospholipids. The protein is Chromosomal replication initiator protein DnaA of Pseudothermotoga lettingae (strain ATCC BAA-301 / DSM 14385 / NBRC 107922 / TMO) (Thermotoga lettingae).